A 474-amino-acid chain; its full sequence is L-arabinose isomerase (474 aa).

Mn(2+) is bound by residues glutamate 306, glutamate 331, histidine 348, and histidine 447.

The protein belongs to the arabinose isomerase family. It depends on Mn(2+) as a cofactor.

The enzyme catalyses beta-L-arabinopyranose = L-ribulose. It functions in the pathway carbohydrate degradation; L-arabinose degradation via L-ribulose; D-xylulose 5-phosphate from L-arabinose (bacterial route): step 1/3. Its function is as follows. Catalyzes the conversion of L-arabinose to L-ribulose. The polypeptide is L-arabinose isomerase (Levilactobacillus brevis (strain ATCC 367 / BCRC 12310 / CIP 105137 / JCM 1170 / LMG 11437 / NCIMB 947 / NCTC 947) (Lactobacillus brevis)).